Reading from the N-terminus, the 248-residue chain is Probable transcriptional regulatory protein Acid345_2125 (248 aa).

This sequence belongs to the TACO1 family.

The protein localises to the cytoplasm. The sequence is that of Probable transcriptional regulatory protein Acid345_2125 from Koribacter versatilis (strain Ellin345).